The following is a 1068-amino-acid chain: Ubiquitin-protein ligase E3B (1068 aa).

Met1 is subject to N-acetylmethionine. An IQ domain is found at Arg29 to Asp58. Position 419 is a phosphoserine (Ser419). Residues Ser702–Ser1068 form the HECT domain. The active-site Glycyl thioester intermediate is the Cys1036.

As to expression, widely expressed.

Its subcellular location is the postsynaptic density. It carries out the reaction S-ubiquitinyl-[E2 ubiquitin-conjugating enzyme]-L-cysteine + [acceptor protein]-L-lysine = [E2 ubiquitin-conjugating enzyme]-L-cysteine + N(6)-ubiquitinyl-[acceptor protein]-L-lysine.. The protein operates within protein modification; protein ubiquitination. In terms of biological role, E3 ubiquitin-protein ligase which accepts ubiquitin from an E2 ubiquitin-conjugating enzyme in the form of a thioester and then directly transfers the ubiquitin to targeted substrates. Ubiquitinates BCKDK and targets it for degradation, thereby regulating various metabolic processes. Involved in the positive regulation of neurite branching in hippocampal neurons and the control of neuronal spine number and morphology, through the ubiquitination of PPP3CC. The polypeptide is Ubiquitin-protein ligase E3B (UBE3B) (Homo sapiens (Human)).